The sequence spans 122 residues: MIQSQTHLNVADNSGARELMCIRIIGTSNRRYAHIGDVIVAVIKEAAPNSPLERSEVIRAVIVRTCKELKRDNGMIIRYDDNAAVVIDQEGNPKGTRIFGAIARELRQLNFTKIVSLAPEVL.

The protein belongs to the universal ribosomal protein uL14 family. Part of the 50S ribosomal subunit.

The protein resides in the plastid. The protein localises to the chloroplast. Functionally, binds to 23S rRNA. This Manihot esculenta (Cassava) protein is Large ribosomal subunit protein uL14c.